The following is a 746-amino-acid chain: Histone-lysine N-methyltransferase EZH2 (746 aa).

Positions M1–A340 are interaction with DNMT1, DNMT3A and DNMT3B. S21 is subject to Phosphoserine; by PKB/AKT1. The interval K39–V68 is interaction with EED. S75 carries O-linked (GlcNAc) serine glycosylation. At S76 the chain carries Phosphoserine. The tract at residues Q180–K222 is disordered. The span at N182 to E195 shows a compositional bias: acidic residues. Residues R196 to K222 show a composition bias toward basic and acidic residues. The interaction with CDYL stretch occupies residues E329 to P522. T339 is subject to Phosphothreonine. Residues A340–P426 are disordered. T345 carries the post-translational modification Phosphothreonine; by CDK1 and CDK2. Residues T345–R357 show a composition bias toward basic residues. A phosphoserine mark is found at S363 and S366. T367 carries the phosphothreonine modification. The segment covering E374 to G385 has biased composition (basic and acidic residues). T487 carries the phosphothreonine modification. The region spanning C503–S605 is the CXC domain. The region spanning K612–R727 is the SET domain. K634 is covalently cross-linked (Glycyl lysine isopeptide (Lys-Gly) (interchain with G-Cter in SUMO2)).

Belongs to the class V-like SAM-binding methyltransferase superfamily. Histone-lysine methyltransferase family. EZ subfamily. In terms of assembly, component of the PRC2/EED-EZH2 complex, which includes EED, EZH2, SUZ12, RBBP4 and RBBP7 and possibly AEBP2. The minimum components required for methyltransferase activity of the PRC2/EED-EZH2 complex are EED, EZH2 and SUZ12. The PRC2 complex may also interact with DNMT1, DNMT3A, DNMT3B and PHF1 via the EZH2 subunit and with SIRT1 via the SUZ12 subunit. Interacts with HDAC1 and HDAC2. Binds ATRX via the SET domain. Interacts with PRAME. Interacts with CDYL. Interacts with CLOCK, BMAL1 and CRY1. Interacts with DNMT3L; the interaction is direct. Interacts with EZHIP; the interaction blocks EZH2 methyltransferase activity. Interacts with ZNF263; recruited to the SIX3 promoter along with other proteins involved in chromatin modification and transcriptional corepression where it contributes to transcriptional repression. Interacts with ARMC12. Interacts with ZMYND8; the interaction is dependent on the presence of chromatin. Interacts with DDX18; this interaction inhibits the PRC2 complex. In terms of processing, phosphorylated by AKT1. Phosphorylation by AKT1 reduces methyltransferase activity. Phosphorylation at Thr-345 by CDK1 and CDK2 promotes maintenance of H3K27me3 levels at EZH2-target loci, thus leading to epigenetic gene silencing. Sumoylated. Post-translationally, glycosylated: O-GlcNAcylation at Ser-75 by OGT increases stability of EZH2 and facilitates the formation of H3K27me3 by the PRC2/EED-EZH2 complex. As to expression, in the ovary, expressed in primordial follicles and oocytes and also in external follicle cells (at protein level). Expressed in many tissues. Overexpressed in numerous tumor types including carcinomas of the breast, colon, larynx, lymphoma and testis.

The protein localises to the nucleus. It catalyses the reaction L-lysyl(27)-[histone H3] + 3 S-adenosyl-L-methionine = N(6),N(6),N(6)-trimethyl-L-lysyl(27)-[histone H3] + 3 S-adenosyl-L-homocysteine + 3 H(+). Polycomb group (PcG) protein. Catalytic subunit of the PRC2/EED-EZH2 complex, which methylates 'Lys-9' (H3K9me) and 'Lys-27' (H3K27me) of histone H3, leading to transcriptional repression of the affected target gene. Able to mono-, di- and trimethylate 'Lys-27' of histone H3 to form H3K27me1, H3K27me2 and H3K27me3, respectively. Displays a preference for substrates with less methylation, loses activity when progressively more methyl groups are incorporated into H3K27, H3K27me0 &gt; H3K27me1 &gt; H3K27me2. Compared to EZH1-containing complexes, it is more abundant in embryonic stem cells and plays a major role in forming H3K27me3, which is required for embryonic stem cell identity and proper differentiation. The PRC2/EED-EZH2 complex may also serve as a recruiting platform for DNA methyltransferases, thereby linking two epigenetic repression systems. Genes repressed by the PRC2/EED-EZH2 complex include HOXC8, HOXA9, MYT1, CDKN2A and retinoic acid target genes. EZH2 can also methylate non-histone proteins such as the transcription factor GATA4 and the nuclear receptor RORA. Regulates the circadian clock via histone methylation at the promoter of the circadian genes. Essential for the CRY1/2-mediated repression of the transcriptional activation of PER1/2 by the CLOCK-BMAL1 heterodimer; involved in the di and trimethylation of 'Lys-27' of histone H3 on PER1/2 promoters which is necessary for the CRY1/2 proteins to inhibit transcription. The protein is Histone-lysine N-methyltransferase EZH2 of Homo sapiens (Human).